The sequence spans 871 residues: Alanine--tRNA ligase (871 aa).

Zn(2+) contacts are provided by His-590, His-594, Cys-694, and His-698.

The protein belongs to the class-II aminoacyl-tRNA synthetase family. Requires Zn(2+) as cofactor.

The protein resides in the cytoplasm. It carries out the reaction tRNA(Ala) + L-alanine + ATP = L-alanyl-tRNA(Ala) + AMP + diphosphate. Catalyzes the attachment of alanine to tRNA(Ala) in a two-step reaction: alanine is first activated by ATP to form Ala-AMP and then transferred to the acceptor end of tRNA(Ala). Also edits incorrectly charged Ser-tRNA(Ala) and Gly-tRNA(Ala) via its editing domain. This chain is Alanine--tRNA ligase, found in Thermoplasma acidophilum (strain ATCC 25905 / DSM 1728 / JCM 9062 / NBRC 15155 / AMRC-C165).